The chain runs to 375 residues: Dihydroorotate dehydrogenase (quinone) (375 aa).

Residues 78–82 and Thr102 each bind FMN; that span reads AGLDK. Residue Lys82 participates in substrate binding. A substrate-binding site is contributed by 127–131; that stretch reads NRMGF. 2 residues coordinate FMN: Asn159 and Asn192. Residue Asn192 coordinates substrate. The active-site Nucleophile is Ser195. Residue Asn197 coordinates substrate. Residues Lys230 and Thr258 each coordinate FMN. 259–260 provides a ligand contact to substrate; it reads NT. FMN contacts are provided by residues Gly288, Gly317, and 338–339; that span reads YT.

This sequence belongs to the dihydroorotate dehydrogenase family. Type 2 subfamily. As to quaternary structure, monomer. It depends on FMN as a cofactor.

It is found in the cell membrane. The catalysed reaction is (S)-dihydroorotate + a quinone = orotate + a quinol. It functions in the pathway pyrimidine metabolism; UMP biosynthesis via de novo pathway; orotate from (S)-dihydroorotate (quinone route): step 1/1. In terms of biological role, catalyzes the conversion of dihydroorotate to orotate with quinone as electron acceptor. This chain is Dihydroorotate dehydrogenase (quinone), found in Cyanothece sp. (strain PCC 7425 / ATCC 29141).